The chain runs to 455 residues: Polyadenylation factor subunit 2 (455 aa).

WD repeat units lie at residues 80–119 (KVKHVIPAIQWSPEGRRLIVATFSGEFSLWNGSSFTFETI), 122–162 (AHDT…KELD), 164–203 (IHTEGIRDVAFSNNDSKFVTCSDDNILKIWNFSNGQQERV), 206–245 (GHHWDVRSCDWHPELGLIVSGSKDNLVKLWDPRSGQCVST), 248–288 (KFKH…NELM), 291–331 (RDEV…EKPI), and 337–376 (AHEKCISAIAYNPVGHILATAAKDRTIRFWTRARPVDPNA). Disordered stretches follow at residues 406 to 425 (EYGAAPPPASTAFPQQTQYN) and 430 to 455 (RVPEIKEPTPTTDKEQRTSILPGLSI). Over residues 432–446 (PEIKEPTPTTDKEQR) the composition is skewed to basic and acidic residues.

The protein localises to the nucleus. Functionally, required for 3'-end cleavage and polyadenylation of pre-mRNAs. Also involved in chromosome segregation where it has a role in chromosome attachment to the mitotic spindle. This is Polyadenylation factor subunit 2 (PFS2) from Candida glabrata (strain ATCC 2001 / BCRC 20586 / JCM 3761 / NBRC 0622 / NRRL Y-65 / CBS 138) (Yeast).